We begin with the raw amino-acid sequence, 348 residues long: UDP-glucose 4-epimerase (348 aa).

Residue Thr125 participates in substrate binding. The Proton acceptor role is filled by Tyr149.

It belongs to the NAD(P)-dependent epimerase/dehydratase family. Requires NAD(+) as cofactor.

The enzyme catalyses UDP-alpha-D-glucose = UDP-alpha-D-galactose. It functions in the pathway carbohydrate metabolism; galactose metabolism. Its pathway is glycan metabolism; exopolysaccharide biosynthesis. The polypeptide is UDP-glucose 4-epimerase (exoB) (Azospirillum brasilense).